The following is a 107-amino-acid chain: RNA polymerase II transcriptional coactivator KIWI (107 aa).

The interval 1 to 40 is disordered; that stretch reads MSSRGKRKDEDVRASDDESETHAPAKKVAKPADDSDQSDD. Basic and acidic residues predominate over residues 7-23; it reads RKDEDVRASDDESETHA.

Belongs to the transcriptional coactivator PC4 family.

It localises to the nucleus. General coactivator that functions cooperatively with TAFs and mediates functional interactions between upstream activators and the general transcriptional machinery. Binds single-stranded DNA. The polypeptide is RNA polymerase II transcriptional coactivator KIWI (KIWI) (Arabidopsis thaliana (Mouse-ear cress)).